The primary structure comprises 290 residues: MSARIIDGKTIAQTIRSEVAEKVKQRIKIGKRAPGLAVILVGDNPASQIYVASKRKACDEVGFISRSYDLPDTTSEADLLNLIDTLNEDNTIDGILVQLPLPAGIDNVKVLERIHPDKDVDGFHPYNIGRLCQRAPKLRPCTPRGIVTLLERCNIPMNGLNAVIIGASNIVGRPMSLELLLAGCTTTVTHRFTKDLRFHVEHADLVVVAVGKPNFIPGEWIKPGAIVIDVGINRLENGKVVGDVDFAQASQRAGWISPVPGGVGPMTVATLIQNTLQACEEYHDPDIGNN.

NADP(+) contacts are provided by residues 166–168 (GAS) and Ile232.

It belongs to the tetrahydrofolate dehydrogenase/cyclohydrolase family. In terms of assembly, homodimer.

The catalysed reaction is (6R)-5,10-methylene-5,6,7,8-tetrahydrofolate + NADP(+) = (6R)-5,10-methenyltetrahydrofolate + NADPH. It carries out the reaction (6R)-5,10-methenyltetrahydrofolate + H2O = (6R)-10-formyltetrahydrofolate + H(+). It participates in one-carbon metabolism; tetrahydrofolate interconversion. Its function is as follows. Catalyzes the oxidation of 5,10-methylenetetrahydrofolate to 5,10-methenyltetrahydrofolate and then the hydrolysis of 5,10-methenyltetrahydrofolate to 10-formyltetrahydrofolate. This Proteus mirabilis (strain HI4320) protein is Bifunctional protein FolD.